A 588-amino-acid chain; its full sequence is Probable basic-leucine zipper transcription factor M (588 aa).

A coiled-coil region spans residues 127-157; it reads QVEQQQEQEQEQEQQQKQQQQQYIEKQIQEI. Low complexity predominate over residues 221-240; sequence QQNHIDNQSLNNSNTKTSKN. The interval 221–250 is disordered; that stretch reads QQNHIDNQSLNNSNTKTSKNQQKDNNLPKK. The bZIP domain maps to 263–326; that stretch reads NNNNIEKKRD…GSNLMRPEPE (64 aa). The interval 269 to 289 is basic motif; sequence KKRDQTESSKNFREKKKEYVK. The segment at 291-312 is leucine-zipper; the sequence is IESKILALTLENDKLKKENDSL.

Belongs to the bZIP family.

Its subcellular location is the nucleus. Probable transcriptional regulator. The chain is Probable basic-leucine zipper transcription factor M (bzpM) from Dictyostelium discoideum (Social amoeba).